The chain runs to 323 residues: Probable proline iminopeptidase (323 aa).

An AB hydrolase-1 domain is found at 37-301; that stretch reads VVLHGGPGSR…VIVDEAGHDA (265 aa). Ser-114 functions as the Nucleophile in the catalytic mechanism. Asp-271 is a catalytic residue. The active-site Proton donor is His-299.

Belongs to the peptidase S33 family.

Its subcellular location is the cytoplasm. It catalyses the reaction Release of N-terminal proline from a peptide.. Its function is as follows. Specifically catalyzes the removal of N-terminal proline residues from peptides. The protein is Probable proline iminopeptidase of Streptomyces coelicolor (strain ATCC BAA-471 / A3(2) / M145).